The sequence spans 486 residues: Cardiolipin synthase A (486 aa).

A run of 2 helical transmembrane segments spans residues T3 to V23 and M38 to V58. PLD phosphodiesterase domains lie at M219–R246 and E399–S426. Active-site residues include H224, K226, D231, H404, K406, and D411.

It belongs to the phospholipase D family. Cardiolipin synthase subfamily. ClsA sub-subfamily.

It localises to the cell inner membrane. It catalyses the reaction 2 a 1,2-diacyl-sn-glycero-3-phospho-(1'-sn-glycerol) = a cardiolipin + glycerol. Catalyzes the reversible phosphatidyl group transfer from one phosphatidylglycerol molecule to another to form cardiolipin (CL) (diphosphatidylglycerol) and glycerol. The sequence is that of Cardiolipin synthase A from Salmonella arizonae (strain ATCC BAA-731 / CDC346-86 / RSK2980).